The chain runs to 362 residues: Atypical chemokine receptor 3 (362 aa).

Over Met-1–Leu-47 the chain is Extracellular. Residues Asn-13 and Asn-22 are each glycosylated (N-linked (GlcNAc...) asparagine). A helical transmembrane segment spans residues Ser-48–Val-68. Topologically, residues Asn-69–Cys-81 are cytoplasmic. Residues Tyr-82–Val-102 traverse the membrane as a helical segment. Residues Ser-103 to Lys-118 lie on the Extracellular side of the membrane. Cys-117 and Cys-196 are joined by a disulfide. The chain crosses the membrane as a helical span at residues Ile-119–Ser-139. Topologically, residues Val-140–Arg-162 are cytoplasmic. The chain crosses the membrane as a helical span at residues Val-163–Leu-183. Topologically, residues Lys-184 to Glu-213 are extracellular. Residues Leu-214–Leu-234 form a helical membrane-spanning segment. The Cytoplasmic segment spans residues Leu-235–Lys-252. A helical transmembrane segment spans residues Ile-253–Leu-273. Residues Leu-274 to Ala-296 are Extracellular-facing. The helical transmembrane segment at Leu-297 to Asn-319 threads the bilayer. At Arg-320–Lys-362 the chain is on the cytoplasmic side. The C-terminal cytoplasmic tail stretch occupies residues Tyr-324–Lys-362. A phosphoserine mark is found at Ser-347, Ser-350, and Ser-355.

The protein belongs to the G-protein coupled receptor 1 family. Atypical chemokine receptor subfamily. Homodimer. Can form heterodimers with CXCR4; heterodimerization may regulate CXCR4 signaling activity. Interacts with ARRB1 and ARRB2. In terms of processing, the Ser/Thr residues in the C-terminal cytoplasmic tail may be phosphorylated. Post-translationally, ubiquitinated at the Lys residues in its C-terminal cytoplasmic tail and is essential for correct trafficking from and to the cell membrane. Deubiquitinated by CXCL12-stimulation in a reversible manner. Not detected in blood, liver, lung and heart, but high expression detected in several tumor cell lines (at protein level). Expressed in heart, spleen, kidney, lung, ovary, brain, testis, astrocytes, neutrophils and B-lymphocytes.

It is found in the cell membrane. Its subcellular location is the early endosome. The protein resides in the recycling endosome. Atypical chemokine receptor that controls chemokine levels and localization via high-affinity chemokine binding that is uncoupled from classic ligand-driven signal transduction cascades, resulting instead in chemokine sequestration, degradation, or transcytosis. Also known as interceptor (internalizing receptor) or chemokine-scavenging receptor or chemokine decoy receptor. Acts as a receptor for chemokines CXCL11 and CXCL12/SDF1. Chemokine binding does not activate G-protein-mediated signal transduction but instead induces beta-arrestin recruitment, leading to ligand internalization and activation of MAPK signaling pathway. Required for regulation of CXCR4 protein levels in migrating interneurons, thereby adapting their chemokine responsiveness. In glioma cells, transduces signals via MEK/ERK pathway, mediating resistance to apoptosis. Promotes cell growth and survival. Not involved in cell migration, adhesion or proliferation of normal hematopoietic progenitors but activated by CXCL11 in malignant hemapoietic cells, leading to phosphorylation of ERK1/2 (MAPK3/MAPK1) and enhanced cell adhesion and migration. Plays a regulatory role in CXCR4-mediated activation of cell surface integrins by CXCL12. Required for heart valve development. Regulates axon guidance in the oculomotor system through the regulation of CXCL12 levels. In Mus musculus (Mouse), this protein is Atypical chemokine receptor 3.